The chain runs to 71 residues: Sperm-associated antigen 11A (71 aa).

The first 19 residues, 1 to 19 (MIPRLLPFFASLLFAALLF), serve as a signal peptide directing secretion. 3 disulfide bridges follow: cysteine 32/cysteine 61, cysteine 39/cysteine 54, and cysteine 44/cysteine 62.

Belongs to the beta-defensin family.

The protein localises to the secreted. Its function is as follows. Has antimicrobial activity against E.coli. Plays a role in the defense response in the male reproductive tract, contributing to sperm maturation, storage and protection. This chain is Sperm-associated antigen 11A, found in Mus musculus (Mouse).